Consider the following 716-residue polypeptide: 1,4-alpha-glucan branching enzyme GlgB (716 aa).

The active-site Nucleophile is the D394. The active-site Proton donor is the E447.

It belongs to the glycosyl hydrolase 13 family. GlgB subfamily. As to quaternary structure, monomer.

It carries out the reaction Transfers a segment of a (1-&gt;4)-alpha-D-glucan chain to a primary hydroxy group in a similar glucan chain.. Its pathway is glycan biosynthesis; glycogen biosynthesis. In terms of biological role, catalyzes the formation of the alpha-1,6-glucosidic linkages in glycogen by scission of a 1,4-alpha-linked oligosaccharide from growing alpha-1,4-glucan chains and the subsequent attachment of the oligosaccharide to the alpha-1,6 position. The sequence is that of 1,4-alpha-glucan branching enzyme GlgB from Photobacterium profundum (strain SS9).